A 297-amino-acid chain; its full sequence is NAC domain-containing protein 72 (297 aa).

Positions 14–162 constitute an NAC domain; the sequence is LPPGFRFYPT…DWVLCRIYKK (149 aa). Residues 111 to 168 mediate DNA binding; sequence VGIKKALVFYAGKAPKGTKTNWIMHEYRLIEHSRSHGSSKLDDWVLCRIYKKTSGSQR. Disordered stretches follow at residues 168 to 195 and 259 to 278; these read RQAV…SQLD and GEAE…LTQS. Over residues 266–277 the composition is skewed to polar residues; it reads VNRQQNSSGLTQ.

Expressed in leaves and in root pericycle and epidermis.

The protein resides in the nucleus. In terms of biological role, transcription factors that bind specifically to the 5'-CATGTG-3' motif and with bipartite regions with 5'-CGTr-3' and 5'-YACG-3' as cores. Involved in the regulation of metabolic reprogramming during senescence by promoting the chloroplast protein degradation and the catabolism of lysine, phytol and free fatty acids via the induction of CV, LKR/SDH and PES1 expression. Also triggers the degradation of starch and the accumulation of mono- and disaccharides during senescence by enhancing the expression of AMY1, SFP1 and SWEET15. This is NAC domain-containing protein 72 from Arabidopsis thaliana (Mouse-ear cress).